The following is a 493-amino-acid chain: Glutamyl-tRNA(Gln) amidotransferase subunit A (493 aa).

Active-site charge relay system residues include Lys-78 and Ser-158. Catalysis depends on Ser-182, which acts as the Acyl-ester intermediate.

It belongs to the amidase family. GatA subfamily. Heterotrimer of A, B and C subunits.

The catalysed reaction is L-glutamyl-tRNA(Gln) + L-glutamine + ATP + H2O = L-glutaminyl-tRNA(Gln) + L-glutamate + ADP + phosphate + H(+). In terms of biological role, allows the formation of correctly charged Gln-tRNA(Gln) through the transamidation of misacylated Glu-tRNA(Gln) in organisms which lack glutaminyl-tRNA synthetase. The reaction takes place in the presence of glutamine and ATP through an activated gamma-phospho-Glu-tRNA(Gln). The sequence is that of Glutamyl-tRNA(Gln) amidotransferase subunit A from Methylorubrum extorquens (strain PA1) (Methylobacterium extorquens).